A 135-amino-acid polypeptide reads, in one-letter code: ATP synthase epsilon chain (135 aa).

The protein belongs to the ATPase epsilon chain family. F-type ATPases have 2 components, CF(1) - the catalytic core - and CF(0) - the membrane proton channel. CF(1) has five subunits: alpha(3), beta(3), gamma(1), delta(1), epsilon(1). CF(0) has three main subunits: a, b and c.

It is found in the cell inner membrane. Its function is as follows. Produces ATP from ADP in the presence of a proton gradient across the membrane. The protein is ATP synthase epsilon chain of Hyphomonas neptunium (strain ATCC 15444).